We begin with the raw amino-acid sequence, 78 residues long: Lantibiotic cinnamycin (78 aa).

A propeptide spanning residues 1-59 (MTASILQQSVVDADFRAALLENPAAFGASAAALPTPVEAQDQASLDFWTKDIAATEAFA) is cleaved from the precursor. Cross-links (beta-methyllanthionine (Cys-Thr)) lie at residues 60–77 (CRQSCSFGPFTFVCDGNT) and 64–70 (CSFGPFT). A cross-link (lanthionine (Ser-Cys)) is located at residues 63–73 (SCSFGPFTFVC). Positions 65 to 78 (SFGPFTFVCDGNTK) form a cross-link, lysinoalanine (Ser-Lys). At Asp74 the chain carries (3R)-3-hydroxyaspartate.

The protein belongs to the type B lantibiotic family. In terms of processing, maturation of lantibiotics involves the enzymatic conversion of Thr, and Ser into dehydrated AA and the formation of thioether bonds with cysteine or the formation of dialkylamine bonds with lysine. This is followed by membrane translocation and cleavage of the modified precursor.

Its function is as follows. Can act as inhibitor of the enzyme phospholipase A2, and of the angiotensin-converting enzyme. Shows inhibitory activities against herpes simplex virus and immunopotentiating activities. Its antimicrobial activities are not very pronounced. The polypeptide is Lantibiotic cinnamycin (cinA) (Streptomyces griseoverticillatus (Streptoverticillium griseoverticillatum)).